A 446-amino-acid polypeptide reads, in one-letter code: tRNA-2-methylthio-N(6)-dimethylallyladenosine synthase (446 aa).

Positions 2–119 constitute an MTTase N-terminal domain; that stretch reads KKIYIKTFGC…LPELIAQRRE (118 aa). [4Fe-4S] cluster-binding residues include cysteine 11, cysteine 48, cysteine 82, cysteine 156, cysteine 160, and cysteine 163. The region spanning 142 to 376 is the Radical SAM core domain; it reads RVEGGAAFVS…RIEAQAQGVN (235 aa). Residues 377 to 440 enclose the TRAM domain; that stretch reads RSMVGSVQRV…PHSLRGEAVT (64 aa).

This sequence belongs to the methylthiotransferase family. MiaB subfamily. As to quaternary structure, monomer. It depends on [4Fe-4S] cluster as a cofactor.

It is found in the cytoplasm. The enzyme catalyses N(6)-dimethylallyladenosine(37) in tRNA + (sulfur carrier)-SH + AH2 + 2 S-adenosyl-L-methionine = 2-methylsulfanyl-N(6)-dimethylallyladenosine(37) in tRNA + (sulfur carrier)-H + 5'-deoxyadenosine + L-methionine + A + S-adenosyl-L-homocysteine + 2 H(+). Functionally, catalyzes the methylthiolation of N6-(dimethylallyl)adenosine (i(6)A), leading to the formation of 2-methylthio-N6-(dimethylallyl)adenosine (ms(2)i(6)A) at position 37 in tRNAs that read codons beginning with uridine. This is tRNA-2-methylthio-N(6)-dimethylallyladenosine synthase from Thiobacillus denitrificans (strain ATCC 25259 / T1).